The chain runs to 213 residues: MVADVKSPAGLAAFNTTLAEQAFATGFVLSGEDAQLFAALGSAPNASTYPNVARWYANVASYTDAERKTWASAGGSAPAAAAADGDDFDLFGSDDEEEDAEKAKIVEERLAAYAEKKAKKAGPIAKSSVILDVKPWDDETDLGEMEKLVRSIEMDGLVWGGAKLIPIGYGIKKLQIITVIEDLKVSVDDLIEKITGDFEDHVQSVDIVAFNKI.

This sequence belongs to the EF-1-beta/EF-1-delta family. As to quaternary structure, EF-1 is composed of 4 subunits: alpha, beta, delta, and gamma.

In terms of biological role, EF-1-beta and EF-1-delta stimulate the exchange of GDP bound to EF-1-alpha to GTP. This Caenorhabditis elegans protein is Probable elongation factor 1-beta/1-delta 1 (eef-1B.1).